The sequence spans 472 residues: Uronate isomerase (472 aa).

The protein belongs to the metallo-dependent hydrolases superfamily. Uronate isomerase family.

The catalysed reaction is D-glucuronate = D-fructuronate. It carries out the reaction aldehydo-D-galacturonate = keto-D-tagaturonate. It functions in the pathway carbohydrate metabolism; pentose and glucuronate interconversion. The chain is Uronate isomerase from Nostoc punctiforme (strain ATCC 29133 / PCC 73102).